A 502-amino-acid chain; its full sequence is Cytochrome P450 monooxygenase AacuE (502 aa).

Residues 4 to 26 traverse the membrane as a helical segment; sequence AITGLVATVTTFLAYIVFLSYTP. Residue Asn393 is glycosylated (N-linked (GlcNAc...) asparagine). Residue Cys439 participates in heme binding.

This sequence belongs to the cytochrome P450 family. Heme serves as cofactor.

It is found in the membrane. Its pathway is secondary metabolite biosynthesis. Cytochrome P450 monooxygenase; part of the gene cluster that mediates the biosynthesis of the tetrahydroxanthone dimer secalonic acid D. The pathway begins with the synthesis of atrochrysone thioester by the polyketide synthase AacuL. The atrochrysone carboxyl ACP thioesterase AacuM then breaks the thioester bond and releases the atrochrysone carboxylic acid from AacuL. Atrochrysone carboxylic acid is decarboxylated by the decarboxylase AacuI, and oxidized by the anthrone oxygenase AacuG to yield emodin. Emodin is then reduced to emodin hydroquinone by a yet unidentified oxidoreductase. A-ring reduction by the short chain dehydrogenase AacuN, dehydration by the scytalone dehydratase-like protein AacuK and probable spontaneous re-oxidation, results in overall deoxygenation to chrysophanol. Baeyer-Villiger oxidation by the Baeyer-Villiger monooxygenase (BVMO) AacuH then yields monodictyphenone. Monodictyphenone is transformed into compounds with the tetrahydroxanthone skeleton via methylesterification by the methyltransferase AacuQ, followed by the action of the flavin-dependent monooxygenase AacuC, the isomerase AacuP, and the short chain dehydrogenase/reductase AacuF or AacuD. AacuF and AacuD should accept the same compound as a substrate but perform the ketoreduction with a different stereoselectivity, thus yielding blennolides B and A, respectively. In the final step of the biosynthesis, the cytochrome P450 monooxygenase AacuE accepts blennolide B and/or blennolide A to conduct the dimerization reaction to furnish the tetrahydroxanthone dimers, secalonic acids D, B, and F. This Aspergillus aculeatus (strain ATCC 16872 / CBS 172.66 / WB 5094) protein is Cytochrome P450 monooxygenase AacuE.